A 308-amino-acid chain; its full sequence is Lysophosphatidic acid receptor 6 (308 aa).

Over 1–16 the chain is Extracellular; sequence MVSSNCSTEDSFKYTL. N-linked (GlcNAc...) asparagine glycosylation occurs at N5. A helical membrane pass occupies residues 17 to 43; the sequence is YGCVFSMVFVLGLIANCVAIYIFTFTL. Residues 44 to 52 are Cytoplasmic-facing; the sequence is KVRNETTTY. Residues 53–76 form a helical membrane-spanning segment; it reads MLNLAISDLLFVFTLPFRIYYFVV. The Extracellular segment spans residues 77 to 89; it reads RNWPFGDVLCKIS. Residues C86 and C165 are joined by a disulfide bond. Residues 90–109 form a helical membrane-spanning segment; that stretch reads VTLFYTNMYGSILFLTCISV. Over 110-130 the chain is Cytoplasmic; the sequence is DRFLAIVHPFRSKTLRTKRNA. Residues 131–151 traverse the membrane as a helical segment; that stretch reads RIVCVAVWITVLAGSTPASFF. The Extracellular portion of the chain corresponds to 152 to 178; that stretch reads QSTNRQNNTEQRTCFENFPESTWKTYL. The helical transmembrane segment at 179-206 threads the bilayer; it reads SRIVIFIEIVGFFIPLILNVTCSTMVLR. The Cytoplasmic portion of the chain corresponds to 207 to 224; sequence TLNKPLTLSRNKLSKKKV. A helical transmembrane segment spans residues 225 to 250; it reads LKMIFVHLVIFCFCFVPYNITLILYS. Residues 251–269 are Extracellular-facing; the sequence is LMRTQTWINCSVVTAVRTM. The chain crosses the membrane as a helical span at residues 270-289; sequence YPVTLCIAVSNCCFDPIVYY. Residue C281 is the site of S-palmitoyl cysteine attachment. Residues 290–308 lie on the Cytoplasmic side of the membrane; that stretch reads FTSDTNSELDKKQQVHQNT.

It belongs to the G-protein coupled receptor 1 family. In terms of tissue distribution, induced in activated T-cells.

The protein resides in the cell membrane. In terms of biological role, binds to oleoyl-L-alpha-lysophosphatidic acid (LPA). Intracellular cAMP is involved in the receptor activation. The chain is Lysophosphatidic acid receptor 6 (LPAR6) from Gallus gallus (Chicken).